A 161-amino-acid chain; its full sequence is Regulator of ribonuclease activity A (161 aa).

This sequence belongs to the RraA family. Homotrimer. Binds to both RNA-binding sites in the C-terminal region of Rne and to RhlB.

Its subcellular location is the cytoplasm. Functionally, globally modulates RNA abundance by binding to RNase E (Rne) and regulating its endonucleolytic activity. Can modulate Rne action in a substrate-dependent manner by altering the composition of the degradosome. Modulates RNA-binding and helicase activities of the degradosome. The protein is Regulator of ribonuclease activity A of Klebsiella pneumoniae (strain 342).